A 288-amino-acid chain; its full sequence is Nucleotide-binding protein Mlg_2233 (288 aa).

11-18 contacts ATP; the sequence is GLSGSGKS. A GTP-binding site is contributed by 63 to 66; that stretch reads DARN.

The protein belongs to the RapZ-like family.

Functionally, displays ATPase and GTPase activities. The polypeptide is Nucleotide-binding protein Mlg_2233 (Alkalilimnicola ehrlichii (strain ATCC BAA-1101 / DSM 17681 / MLHE-1)).